A 1076-amino-acid chain; its full sequence is Guanylyl cyclase C (1076 aa).

The N-terminal stretch at 1–23 is a signal peptide; sequence MKSPLLGLVVWSLLLQLLQPGLA. Residues 24-433 lie on the Extracellular side of the membrane; it reads FWNSQISQNC…PHDIPGLGPH (410 aa). Asn-35, Asn-82, Asn-191, Asn-198, Asn-287, Asn-306, Asn-310, Asn-348, and Asn-405 each carry an N-linked (GlcNAc...) asparagine glycan. A helical transmembrane segment spans residues 434 to 457; the sequence is ILLIAVCTLAGVVVLILLIALLVL. At 458 to 1076 the chain is on the cytoplasmic side; it reads RKYKKDNELR…NTTDQDSTYF (619 aa). The 261-residue stretch at 492–752 folds into the Protein kinase domain; sequence LKIDDDKKRD…KIENTLAKIF (261 aa). The region spanning 827 to 957 is the Guanylate cyclase domain; that stretch reads TVYFSDIVGF…DTVNTASRME (131 aa).

This sequence belongs to the adenylyl cyclase class-4/guanylyl cyclase family. In terms of assembly, homotrimer. Interacts via its C-terminal region with NHERF4. Interacts with the lectin chaperone VIP36. Post-translationally, glycosylation at Asn-62 is required for interaction with VIP36 while glycosylation at Asn-348 and Asn-405 modulates ligand-mediated GC-C activation.

The protein localises to the cell membrane. Its subcellular location is the endoplasmic reticulum membrane. The catalysed reaction is GTP = 3',5'-cyclic GMP + diphosphate. In terms of biological role, guanylyl cyclase that catalyzes synthesis of cyclic GMP (cGMP) from GTP. The chain is Guanylyl cyclase C (GUCY2C) from Cavia porcellus (Guinea pig).